The sequence spans 391 residues: MSLNPRDVVVIDCVRSPMGRAKAGCFRNVRAETLSATLIDALFDRNDKVDPAEVEDLIWGCVNQTLEQGFNVARQISLLTRIPHTSSAQTVNRLCGSAMSAIHTAAQAIMTGNGDVFVVGGVEHMGHVPMTQGFDHNPAASKYSAKASNMMGLTAEMLAKMHGISRQQQDEFGARSHRLAHEATLEGRFRNEIISIQGHDDDGFPALIENDETIRPETTAESLAQLRPAFDPKSGTVTAGQSSQLTDGASAMLLMSAERAQALGLTPMAKIRSMATAGCDPAIMGYGPVPATKKALKRAGLKVEDIDFWELNEAFAAQSLPVIKDLKLMGVVDQKVNLNGGAIALGHPLGCSGARISTTLLNVMAAKGGTLGVSTMCIGLGQGIATVWERI.

The active-site Acyl-thioester intermediate is the Cys-95. Residues His-347 and Cys-377 each act as proton acceptor in the active site.

This sequence belongs to the thiolase-like superfamily. Thiolase family. In terms of assembly, heterotetramer of two alpha chains (FadB) and two beta chains (FadA).

The protein resides in the cytoplasm. The catalysed reaction is an acyl-CoA + acetyl-CoA = a 3-oxoacyl-CoA + CoA. Its pathway is lipid metabolism; fatty acid beta-oxidation. Functionally, catalyzes the final step of fatty acid oxidation in which acetyl-CoA is released and the CoA ester of a fatty acid two carbons shorter is formed. This Hahella chejuensis (strain KCTC 2396) protein is 3-ketoacyl-CoA thiolase.